The primary structure comprises 429 residues: Phosphoribosylamine--glycine ligase (429 aa).

Residues 109–316 (KDFLARHKIP…LVELCLKACD (208 aa)) form the ATP-grasp domain. 135 to 196 (LREKGTPIVV…EEFLDGEEAS (62 aa)) serves as a coordination point for ATP. The Mg(2+) site is built by glutamate 286 and asparagine 288.

The protein belongs to the GARS family. Mg(2+) serves as cofactor. It depends on Mn(2+) as a cofactor.

The catalysed reaction is 5-phospho-beta-D-ribosylamine + glycine + ATP = N(1)-(5-phospho-beta-D-ribosyl)glycinamide + ADP + phosphate + H(+). The protein operates within purine metabolism; IMP biosynthesis via de novo pathway; N(1)-(5-phospho-D-ribosyl)glycinamide from 5-phospho-alpha-D-ribose 1-diphosphate: step 2/2. In Haemophilus influenzae (strain ATCC 51907 / DSM 11121 / KW20 / Rd), this protein is Phosphoribosylamine--glycine ligase.